The following is a 245-amino-acid chain: MIKLVLIRHGQSLWNLENRFTGWTDVDLSKNGLSEAREAGTILKKNGYTFDVAYTSVLKRAIRTLWIVLHEMDLTWVPIHNSWKLNERHYGALQGLNKDETAKKYGDEQVHIWRRSIDVRPPALTEDDPRYEANNPRYKTLKKDEFPLTECLEDTEKRVVDYWHSEIVPSLKSGEKVIISSHGNTIRSLVKYLDNLSSDGVVSLNIPTSIPLVYELDEKLRPIRHYYLSMDGEVPEGEIPKHISF.

Substrate contacts are provided by residues 8 to 15, 21 to 22, Arg60, 87 to 90, Lys98, 114 to 115, and 183 to 184; these read RHGQSLWN, TG, ERHY, RR, and GN. The active-site Tele-phosphohistidine intermediate is the His9. The active-site Proton donor/acceptor is Glu87.

The protein belongs to the phosphoglycerate mutase family. BPG-dependent PGAM subfamily.

It carries out the reaction (2R)-2-phosphoglycerate = (2R)-3-phosphoglycerate. Its pathway is carbohydrate degradation; glycolysis; pyruvate from D-glyceraldehyde 3-phosphate: step 3/5. Functionally, catalyzes the interconversion of 2-phosphoglycerate and 3-phosphoglycerate. In Bacillus mycoides (strain KBAB4) (Bacillus weihenstephanensis), this protein is 2,3-bisphosphoglycerate-dependent phosphoglycerate mutase.